The primary structure comprises 770 residues: 3-isopropylmalate dehydratase (770 aa).

The [4Fe-4S] cluster site is built by Cys-354, Cys-415, and Cys-418.

Belongs to the aconitase/IPM isomerase family. Monomer. The cofactor is [4Fe-4S] cluster.

It catalyses the reaction (2R,3S)-3-isopropylmalate = (2S)-2-isopropylmalate. It functions in the pathway amino-acid biosynthesis; L-leucine biosynthesis; L-leucine from 3-methyl-2-oxobutanoate: step 2/4. Its function is as follows. Catalyzes the isomerization between 2-isopropylmalate and 3-isopropylmalate, via the formation of 2-isopropylmaleate. The protein is 3-isopropylmalate dehydratase (LEU1) of Candida maltosa (Yeast).